Reading from the N-terminus, the 553-residue chain is Arginine--tRNA ligase (553 aa).

The short motif at alanine 130–histidine 140 is the 'HIGH' region element.

It belongs to the class-I aminoacyl-tRNA synthetase family. As to quaternary structure, monomer.

It localises to the cytoplasm. The enzyme catalyses tRNA(Arg) + L-arginine + ATP = L-arginyl-tRNA(Arg) + AMP + diphosphate. This is Arginine--tRNA ligase from Staphylococcus aureus (strain bovine RF122 / ET3-1).